Consider the following 272-residue polypeptide: 3-keto-5-aminohexanoate cleavage enzyme (272 aa).

E15 lines the (5S)-5-amino-3-oxohexanoate pocket. Zn(2+) is bound by residues H47 and H49. (5S)-5-amino-3-oxohexanoate is bound by residues S83, G86, and T107. E226 lines the Zn(2+) pocket.

This sequence belongs to the BKACE family. Kce subfamily. In terms of assembly, homotetramer. Requires Zn(2+) as cofactor.

It catalyses the reaction (5S)-5-amino-3-oxohexanoate + acetyl-CoA = (3S)-3-aminobutanoyl-CoA + acetoacetate. It participates in amino-acid degradation; L-lysine degradation via acetate pathway. With respect to regulation, 3-fold increase in activity by addition of 10 mM 2-mercaptoethanol. Addition of CoCl(2) and to a lesser extent MnCl(2) increases the activity but not MgCl(2). Inhibited by phosphate buffer but not by 5,5'-dithio-2-nitrobenzoic acid. Functionally, involved in the anaerobic fermentation of lysine. Catalyzes the reversible reaction between 3-keto-5-aminohexanoate (KAH) and acetyl-CoA to form 3-aminobutyryl-CoA and acetoacetate. The reaction involves the deprotonation of KAH, the nucleophilic addition onto acetyl-CoA and the intramolecular transfer of the CoA moiety. It can also use beta-alanyl-CoA as substrate. This chain is 3-keto-5-aminohexanoate cleavage enzyme, found in Fusobacterium nucleatum subsp. nucleatum (strain ATCC 25586 / DSM 15643 / BCRC 10681 / CIP 101130 / JCM 8532 / KCTC 2640 / LMG 13131 / VPI 4355).